We begin with the raw amino-acid sequence, 215 residues long: MESSNLYSKLLNAPKNAPVFLSQNLEADFIVKAYTFGLFPWTSKPVTWWCPDPRCILIPNQIHIQKNMKKFINLYQIKLDYDFLKLITLCRDTRSQSWINDEFITTYYKLFTQGYAHSLELYENNELIGGIYGLILGKVFFGESMVSIKKNASKVAMIKLCDLLKPYDFIIDCQVYNQHLEFMGAHNISRKEFLNILKEKCNQESGFKNFKDLIT.

Belongs to the L/F-transferase family.

Its subcellular location is the cytoplasm. It catalyses the reaction N-terminal L-lysyl-[protein] + L-leucyl-tRNA(Leu) = N-terminal L-leucyl-L-lysyl-[protein] + tRNA(Leu) + H(+). It carries out the reaction N-terminal L-arginyl-[protein] + L-leucyl-tRNA(Leu) = N-terminal L-leucyl-L-arginyl-[protein] + tRNA(Leu) + H(+). The catalysed reaction is L-phenylalanyl-tRNA(Phe) + an N-terminal L-alpha-aminoacyl-[protein] = an N-terminal L-phenylalanyl-L-alpha-aminoacyl-[protein] + tRNA(Phe). Functionally, functions in the N-end rule pathway of protein degradation where it conjugates Leu, Phe and, less efficiently, Met from aminoacyl-tRNAs to the N-termini of proteins containing an N-terminal arginine or lysine. This Campylobacter jejuni (strain RM1221) protein is Leucyl/phenylalanyl-tRNA--protein transferase.